Here is a 556-residue protein sequence, read N- to C-terminus: Mitochondrial distribution and morphology protein 34-2 (556 aa).

One can recognise an SMP-LTD domain in the interval 1-195 (MAFNFNWSPL…LPAIIHRLSL (195 aa)). Disordered regions lie at residues 206–239 (EEMN…DSLG), 299–423 (TDTS…PVTP), and 440–473 (HLPS…DATP). The span at 299–333 (TDTSEFPSSVISPLSPTLSREQSQMGSMSSLHETA) shows a compositional bias: polar residues. A compositionally biased stretch (low complexity) spans 334–357 (SNASMQSRPSMSSHSFSTSTYGLS). Residues 362–374 (RHSKAHARKRKKR) are compositionally biased toward basic residues. Residues 375-385 (VVDLRRPKTTD) are compositionally biased toward basic and acidic residues. Residues 391-402 (SDESVMTESSRP) are compositionally biased toward polar residues. The segment covering 459–468 (ETIRGPKAED) has biased composition (basic and acidic residues).

It belongs to the MDM34 family. In terms of assembly, component of the ER-mitochondria encounter structure (ERMES) or MDM complex, composed of mmm1, mdm10, mdm12 and mdm34.

The protein resides in the mitochondrion outer membrane. In terms of biological role, component of the ERMES/MDM complex, which serves as a molecular tether to connect the endoplasmic reticulum (ER) and mitochondria. Components of this complex are involved in the control of mitochondrial shape and protein biogenesis, and function in nonvesicular lipid trafficking between the ER and mitochondria. Mdm34 is required for the interaction of the ER-resident membrane protein mmm1 and the outer mitochondrial membrane-resident beta-barrel protein mdm10. The sequence is that of Mitochondrial distribution and morphology protein 34-2 from Penicillium rubens (strain ATCC 28089 / DSM 1075 / NRRL 1951 / Wisconsin 54-1255) (Penicillium chrysogenum).